Here is a 106-residue protein sequence, read N- to C-terminus: Large ribosomal subunit protein bL21 (106 aa).

The protein belongs to the bacterial ribosomal protein bL21 family. As to quaternary structure, part of the 50S ribosomal subunit. Contacts protein L20.

Functionally, this protein binds to 23S rRNA in the presence of protein L20. This chain is Large ribosomal subunit protein bL21, found in Streptomyces coelicolor (strain ATCC BAA-471 / A3(2) / M145).